A 125-amino-acid polypeptide reads, in one-letter code: Small ribosomal subunit protein uS13 (125 aa).

A disordered region spans residues 90–125 (QRHRKGLPVRGQRTKTNARTRKGPKRTVAGKKKATK).

It belongs to the universal ribosomal protein uS13 family. In terms of assembly, part of the 30S ribosomal subunit. Forms a loose heterodimer with protein S19. Forms two bridges to the 50S subunit in the 70S ribosome.

Its function is as follows. Located at the top of the head of the 30S subunit, it contacts several helices of the 16S rRNA. In the 70S ribosome it contacts the 23S rRNA (bridge B1a) and protein L5 of the 50S subunit (bridge B1b), connecting the 2 subunits; these bridges are implicated in subunit movement. Contacts the tRNAs in the A and P-sites. In Bifidobacterium longum subsp. infantis (strain ATCC 15697 / DSM 20088 / JCM 1222 / NCTC 11817 / S12), this protein is Small ribosomal subunit protein uS13.